The primary structure comprises 284 residues: Sulfotransferase 2A1 (284 aa).

3'-phosphoadenylyl sulfate-binding residues include Lys43, Ser44, Gly45, Thr46, Asn47, and Trp48. His98 serves as the catalytic Proton acceptor. 3'-phosphoadenylyl sulfate contacts are provided by Arg120, Ser128, Tyr183, Ser217, Met222, Arg246, Lys247, and Gly248.

It belongs to the sulfotransferase 1 family. In terms of assembly, homodimer.

The protein resides in the cytoplasm. It carries out the reaction an alcohol + 3'-phosphoadenylyl sulfate = an alkyl sulfate + adenosine 3',5'-bisphosphate + H(+). The catalysed reaction is taurolithocholate + 3'-phosphoadenylyl sulfate = taurolithocholate 3-sulfate + adenosine 3',5'-bisphosphate + H(+). It catalyses the reaction lithocholate + 3'-phosphoadenylyl sulfate = lithocholate sulfate + adenosine 3',5'-bisphosphate + H(+). The enzyme catalyses (24S)-hydroxycholesterol + 3'-phosphoadenylyl sulfate = (24S)-hydroxycholesterol 24-sulfate + adenosine 3',5'-bisphosphate + H(+). It carries out the reaction (24S)-hydroxycholesterol + 3'-phosphoadenylyl sulfate = (24S)-hydroxycholesterol 3-sulfate + adenosine 3',5'-bisphosphate + H(+). The catalysed reaction is (24S)-hydroxycholesterol 24-sulfate + 3'-phosphoadenylyl sulfate = (24S)-hydroxycholesterol 3,24-disulfate + adenosine 3',5'-bisphosphate + H(+). It catalyses the reaction 3beta-hydroxyandrost-5-en-17-one + 3'-phosphoadenylyl sulfate = dehydroepiandrosterone 3-sulfate + adenosine 3',5'-bisphosphate + H(+). The enzyme catalyses pregnenolone + 3'-phosphoadenylyl sulfate = pregnenolone sulfate + adenosine 3',5'-bisphosphate + H(+). It carries out the reaction androsterone + 3'-phosphoadenylyl sulfate = androsterone 3alpha-sulfate + adenosine 3',5'-bisphosphate + H(+). Sulfotransferase that utilizes 3'-phospho-5'-adenylyl sulfate (PAPS) as sulfonate donor to catalyze the sulfonation of steroids and bile acids in the liver and adrenal glands. Mediates the sulfation of a wide range of steroids and sterols, including pregnenolone, androsterone, DHEA, bile acids, cholesterol and as well many xenobiotics that contain alcohol and phenol functional groups. Sulfonation increases the water solubility of most compounds, and therefore their renal excretion, but it can also result in bioactivation to form active metabolites. Plays an important role in maintening steroid and lipid homeostasis. Plays a key role in bile acid metabolism. In addition, catalyzes the metabolic activation of potent carcinogenic polycyclic arylmethanols. In Rattus norvegicus (Rat), this protein is Sulfotransferase 2A1 (Sult2a1).